Reading from the N-terminus, the 221-residue chain is Serine/arginine-rich splicing factor 2 (221 aa).

Residue Ser2 is modified to N-acetylserine. Ser2 carries the phosphoserine modification. Residues 14-92 (TSLKVDNLTY…RELRVQMARY (79 aa)) enclose the RRM domain. 2 positions are modified to phosphothreonine: Thr22 and Thr25. Position 26 is a phosphoserine (Ser26). Lys52 bears the N6-acetyllysine mark. The tract at residues 92 to 221 (YGRPPDSHHS…SPEEEGAVSS (130 aa)) is disordered. Basic residues-rich tracts occupy residues 117–171 (RRSR…RSKS) and 179–189 (SRSRSRSRSRS). A phosphoserine mark is found at Ser189, Ser191, Ser204, Ser206, Ser208, Ser212, and Ser220.

The protein belongs to the splicing factor SR family. Interacts with CCNL1 and CCNL2. Interacts with SCAF11. Interacts with ZRSR2/U2AF1-RS2. Interacts with CCDC55 (via C-terminus). In vitro, self-associates and binds SRSF1/SFRS1 (ASF/SF2), SNRNP70 and U2AF1 but not U2AF2. Binds SREK1/SFRS12. Interacts with BRDT. Extensively phosphorylated on serine residues in the RS domain. Phosphorylated by SRPK2 and this causes its redistribution from the nuclear speckle to nucleoplasm and controls cell fate decision in response to cisplatin treatment. KAT5/TIP60 inhibits its phosphorylation by preventing SRPK2 nuclear translocation. In terms of processing, acetylation on Lys-52 by KAT5/TIP60 promotes its proteasomal degradation. This effect is counterbalanced by HDAC6, which positively controls SRSF2 protein level by deacetylating it and preventing its proteasomal degradation. In terms of tissue distribution, expressed in all the tissues examined; liver, kidney, spleen, heart, lung and brain.

The protein localises to the nucleus. The protein resides in the nucleoplasm. Its subcellular location is the nucleus speckle. In terms of biological role, necessary for the splicing of pre-mRNA. It is required for formation of the earliest ATP-dependent splicing complex and interacts with spliceosomal components bound to both the 5'- and 3'-splice sites during spliceosome assembly. It also is required for ATP-dependent interactions of both U1 and U2 snRNPs with pre-mRNA. Can bind to the myelin basic protein (MBP) gene MB3 regulatory region and increase transcription of the mbp promoter in cells derived from the CNS. The phosphorylated form (by SRPK2) is required for cellular apoptosis in response to cisplatin treatment. The chain is Serine/arginine-rich splicing factor 2 (Srsf2) from Mus musculus (Mouse).